Consider the following 91-residue polypeptide: Small ribosomal subunit protein uS19 (91 aa).

The protein belongs to the universal ribosomal protein uS19 family.

Its function is as follows. Protein S19 forms a complex with S13 that binds strongly to the 16S ribosomal RNA. The protein is Small ribosomal subunit protein uS19 of Aromatoleum aromaticum (strain DSM 19018 / LMG 30748 / EbN1) (Azoarcus sp. (strain EbN1)).